The sequence spans 232 residues: Phosphate import ATP-binding protein PstB (232 aa).

The ABC transporter domain occupies 1–227 (MFNINMEIKE…PKDRRTENYI (227 aa)). Residue 18-25 (GPSGCGKT) participates in ATP binding.

It belongs to the ABC transporter superfamily. Phosphate importer (TC 3.A.1.7) family. In terms of assembly, the complex is composed of two ATP-binding proteins (PstB), two transmembrane proteins (PstC and PstA) and a solute-binding protein (PstS).

The protein resides in the cell membrane. It carries out the reaction phosphate(out) + ATP + H2O = ADP + 2 phosphate(in) + H(+). Part of the ABC transporter complex PstSACB involved in phosphate import. Responsible for energy coupling to the transport system. In Mycoplasma mycoides subsp. mycoides SC (strain CCUG 32753 / NCTC 10114 / PG1), this protein is Phosphate import ATP-binding protein PstB.